The primary structure comprises 303 residues: Methionyl-tRNA formyltransferase (303 aa).

A (6S)-5,6,7,8-tetrahydrofolate-binding site is contributed by 106-109 (SLLP).

The protein belongs to the Fmt family.

The enzyme catalyses L-methionyl-tRNA(fMet) + (6R)-10-formyltetrahydrofolate = N-formyl-L-methionyl-tRNA(fMet) + (6S)-5,6,7,8-tetrahydrofolate + H(+). In terms of biological role, attaches a formyl group to the free amino group of methionyl-tRNA(fMet). The formyl group appears to play a dual role in the initiator identity of N-formylmethionyl-tRNA by promoting its recognition by IF2 and preventing the misappropriation of this tRNA by the elongation apparatus. In Thermosipho melanesiensis (strain DSM 12029 / CIP 104789 / BI429), this protein is Methionyl-tRNA formyltransferase.